We begin with the raw amino-acid sequence, 1039 residues long: Isoleucine--tRNA ligase (1039 aa).

The 'HIGH' region motif lies at 46–56 (PYCSGAIHLGT). The 'KMSKS' region signature appears at 600-604 (KMSKS). ATP is bound at residue Lys603.

This sequence belongs to the class-I aminoacyl-tRNA synthetase family. IleS type 2 subfamily. As to quaternary structure, monomer. Zn(2+) serves as cofactor.

The protein localises to the cytoplasm. It catalyses the reaction tRNA(Ile) + L-isoleucine + ATP = L-isoleucyl-tRNA(Ile) + AMP + diphosphate. In terms of biological role, catalyzes the attachment of isoleucine to tRNA(Ile). As IleRS can inadvertently accommodate and process structurally similar amino acids such as valine, to avoid such errors it has two additional distinct tRNA(Ile)-dependent editing activities. One activity is designated as 'pretransfer' editing and involves the hydrolysis of activated Val-AMP. The other activity is designated 'posttransfer' editing and involves deacylation of mischarged Val-tRNA(Ile). In Methanocaldococcus jannaschii (strain ATCC 43067 / DSM 2661 / JAL-1 / JCM 10045 / NBRC 100440) (Methanococcus jannaschii), this protein is Isoleucine--tRNA ligase.